A 691-amino-acid polypeptide reads, in one-letter code: Elongation factor G (691 aa).

The region spanning 8 to 283 (KKVRNIGIAA…AVVAYLPAPD (276 aa)) is the tr-type G domain. GTP is bound by residues 17 to 24 (AHIDAGKT), 81 to 85 (DTPGH), and 135 to 138 (NKMD).

Belongs to the TRAFAC class translation factor GTPase superfamily. Classic translation factor GTPase family. EF-G/EF-2 subfamily.

It is found in the cytoplasm. In terms of biological role, catalyzes the GTP-dependent ribosomal translocation step during translation elongation. During this step, the ribosome changes from the pre-translocational (PRE) to the post-translocational (POST) state as the newly formed A-site-bound peptidyl-tRNA and P-site-bound deacylated tRNA move to the P and E sites, respectively. Catalyzes the coordinated movement of the two tRNA molecules, the mRNA and conformational changes in the ribosome. This chain is Elongation factor G, found in Campylobacter jejuni subsp. doylei (strain ATCC BAA-1458 / RM4099 / 269.97).